Here is a 268-residue protein sequence, read N- to C-terminus: MKLFGWMQNKLNGKQGNKKPNTVPITTHPAKQEPREEFSDWPHGLLAIGTFGNNDLKENAAESQDIQEDPTSSEEILDNFTPEEVGKLHKELTKLLTRKPNIEKEIADLPLDRFLNCPSSLEVDRRNSNALCSDSADDHKDEDIEKTISVILGRCKEICGDKNKKAIGKKSISFLLKKMFVCRSGFAPQPSLRDTLQESRMEKLLRVMLNKKIINPQGSSRAASMKKYLEDRQIPTKKESNTEDDTKEKINNGCKWVKTDSEYIVLEI.

A compositionally biased stretch (low complexity) spans 11-21 (LNGKQGNKKPN). Positions 11–39 (LNGKQGNKKPNTVPITTHPAKQEPREEFS) are disordered. Residues 30-39 (AKQEPREEFS) are compositionally biased toward basic and acidic residues. Residues 44-50 (GLLAIGT) carry the IGT motif motif. The segment at 220 to 246 (SRAASMKKYLEDRQIPTKKESNTEDDT) is disordered. Basic and acidic residues predominate over residues 227–246 (KYLEDRQIPTKKESNTEDDT).

It belongs to the LAZY family. As to expression, expressed in roots.

Functionally, involved in the development of the root system architecture by influencing lateral root angles and primary root length. This chain is Protein DEEPER ROOTING 1, found in Prunus persica (Peach).